Consider the following 252-residue polypeptide: C4b-binding protein beta chain (252 aa).

The first 17 residues, 1–17 (MFFWCACCLMVAWRVSA), serve as a signal peptide directing secretion. 3 Sushi domains span residues 21–78 (EHCP…ECRL), 79–136 (GHCP…ICKS), and 137–193 (RDCD…VCKL). 6 disulfides stabilise this stretch: Cys-23–Cys-63, Cys-49–Cys-76, Cys-81–Cys-121, Cys-107–Cys-134, Cys-139–Cys-179, and Cys-165–Cys-191. Residues Asn-64, Asn-71, Asn-98, Asn-117, and Asn-154 are each glycosylated (N-linked (GlcNAc...) asparagine).

As to quaternary structure, disulfide-linked complex of alpha and beta chains of 3 possible sorts: a 570 kDa complex of 7 alpha chains and 1 beta chain, a 530 kDa homoheptamer of alpha chains or a 500 kDa complex of 6 alpha chains and 1 beta chain. The central body of the alpha chain homomer supports tentacles, each with the binding site for C4b at the end.

The protein resides in the secreted. Functionally, controls the classical pathway of complement activation. It binds as a cofactor to C3b/C4b inactivator (C3bINA), which then hydrolyzes the complement fragment C4b. It also accelerates the degradation of the C4bC2a complex (C3 convertase) by dissociating the complement fragment C2a. It also interacts with anticoagulant protein S and with serum amyloid P component. The beta chain binds protein S. The protein is C4b-binding protein beta chain (C4BPB) of Homo sapiens (Human).